The following is a 284-amino-acid chain: Serine/arginine-rich splicing factor RS2Z32 (284 aa).

The 71-residue stretch at 11-81 (TRLYVGRLSS…SRITVEASRG (71 aa)) folds into the RRM domain. The tract at residues 74 to 97 (ITVEASRGAPRGSRDNGSRGPPPG) is disordered. CCHC-type zinc fingers lie at residues 99–116 (GRCFNCGVDGHWARDCTA) and 121–138 (NKCYRCGERGHIERNCKN). The segment at 132-284 (IERNCKNSPS…RPSPKGSESP (153 aa)) is disordered. Over residues 159–180 (RSPRRRRSPSRSRSYSRGRSYS) the composition is skewed to basic residues. 3 positions are modified to phosphoserine: Ser-166, Ser-168, and Ser-184. Positions 186–203 (VRREKSVEDRSRSPKAME) are enriched in basic and acidic residues. Residues Ser-205, Ser-207, Ser-214, Ser-216, Ser-225, Ser-235, Ser-255, Ser-265, Ser-277, and Ser-281 each carry the phosphoserine modification. Basic and acidic residues predominate over residues 209–236 (KGRDQSLSPDRKVIDASPKRGSDYDGSP).

Belongs to the splicing factor SR family. RS2Z subfamily. In terms of assembly, component of the spliceosome. In terms of processing, extensively phosphorylated on serine residues in the RS domain.

Its subcellular location is the nucleus. Functionally, probably involved in intron recognition and spliceosome assembly. This Arabidopsis thaliana (Mouse-ear cress) protein is Serine/arginine-rich splicing factor RS2Z32 (RS2Z32).